The chain runs to 348 residues: Peptidyl-Lys metalloendopeptidase (348 aa).

Residues 1–18 (MFSSVMVALVSLAVAVSA) form the signal peptide. Residues 19-181 (NPGLSLKVSG…RATPTLTRPV (163 aa)) constitute a propeptide that is removed on maturation. Cystine bridges form between Cys186/Cys256 and Cys258/Cys278. A glycan (O-linked (Man) threonine; partial) is linked at Thr223. His298 contributes to the Zn(2+) binding site. Residue Glu299 is part of the active site. 2 residues coordinate Zn(2+): His302 and Asp311.

The cofactor is Zn(2+).

It localises to the secreted. The catalysed reaction is Preferential cleavage in proteins: -Xaa-|-Lys- (in which Xaa may be Pro).. With respect to regulation, inhibited by chelating agents such as EDTA and 1,10-phenanthroline. The protein is Peptidyl-Lys metalloendopeptidase (MEP) of Grifola frondosa (Maitake).